We begin with the raw amino-acid sequence, 426 residues long: MFVDQVSVYVKAGDGGNGLVAYRREKYVPKGGPAGGDGGNGSNVVFKVDEGLNTLMEFRYNRHFKGKRGENGMSKTQHGRNADPLVIPVPPGTTVIDEDTGEVIADLTKHEQEAVIVKGGRGGRGNTRFATPRNPAPDMAENGEPGQERNIKVELKLIADVGLVGFPSVGKSTLLSVVSAAKPKIADYHFTTLSPNLGVVDTQDSRSFVLADLPGLIEGASQGIGLGHQFLRHIERTRVILHVIDMAGTEGRDPYEDYKKINQELSDYDEKLMDRPQIIAANKMDMPNAQENLIQFKNELEDDIPVYEISALTKDGLRDLLFAIADKLETIPKYEKELEETDDTVVYRYQKEEDPFHITRDPDGAFVLYGQRIEKLFKMTDFQHDEAVQRFARQLRGMGVDKALREKGAQDGDVVRLLEYEFEFIE.

An Obg domain is found at 1–158; that stretch reads MFVDQVSVYV…RNIKVELKLI (158 aa). Disordered stretches follow at residues 66–86 and 119–146; these read GKRGENGMSKTQHGRNADPLV and GGRGGRGNTRFATPRNPAPDMAENGEPG. The region spanning 159-329 is the OBG-type G domain; sequence ADVGLVGFPS…LLFAIADKLE (171 aa). GTP contacts are provided by residues 165-172, 190-194, 212-215, 282-285, and 310-312; these read GFPSVGKS, FTTLS, DLPG, NKMD, and SAL. Mg(2+)-binding residues include S172 and T192. Residues 348 to 426 form the OCT domain; it reads RYQKEEDPFH…LLEYEFEFIE (79 aa).

The protein belongs to the TRAFAC class OBG-HflX-like GTPase superfamily. OBG GTPase family. In terms of assembly, monomer. Mg(2+) serves as cofactor.

Its subcellular location is the cytoplasm. An essential GTPase which binds GTP, GDP and possibly (p)ppGpp with moderate affinity, with high nucleotide exchange rates and a fairly low GTP hydrolysis rate. Plays a role in control of the cell cycle, stress response, ribosome biogenesis and in those bacteria that undergo differentiation, in morphogenesis control. In Oceanobacillus iheyensis (strain DSM 14371 / CIP 107618 / JCM 11309 / KCTC 3954 / HTE831), this protein is GTPase Obg.